The primary structure comprises 311 residues: Ribose-phosphate pyrophosphokinase (311 aa).

ATP-binding positions include 37–39 (DGE) and 96–97 (RQ). Mg(2+)-binding residues include H130 and D170. K193 is a catalytic residue. D-ribose 5-phosphate contacts are provided by residues R195, D219, and 223-227 (DTAGT).

The protein belongs to the ribose-phosphate pyrophosphokinase family. Class I subfamily. Homohexamer. The cofactor is Mg(2+).

Its subcellular location is the cytoplasm. The catalysed reaction is D-ribose 5-phosphate + ATP = 5-phospho-alpha-D-ribose 1-diphosphate + AMP + H(+). It participates in metabolic intermediate biosynthesis; 5-phospho-alpha-D-ribose 1-diphosphate biosynthesis; 5-phospho-alpha-D-ribose 1-diphosphate from D-ribose 5-phosphate (route I): step 1/1. Functionally, involved in the biosynthesis of the central metabolite phospho-alpha-D-ribosyl-1-pyrophosphate (PRPP) via the transfer of pyrophosphoryl group from ATP to 1-hydroxyl of ribose-5-phosphate (Rib-5-P). This Aquifex aeolicus (strain VF5) protein is Ribose-phosphate pyrophosphokinase.